A 906-amino-acid polypeptide reads, in one-letter code: Interference hedgehog (906 aa).

A signal peptide spans 1-20 (MSPLTSSLLLFSLLTSSLEA). At 21–715 (IPVLQPSFPP…SHNETVSMSP (695 aa)) the chain is on the extracellular side. Ig-like C2-type domains lie at 39 to 144 (PGVR…TARL), 134 to 236 (PLVV…ISSS), 252 to 341 (PHLL…INVT), and 346 to 433 (PRIT…LQVN). A disulfide bridge links C62 with C128. N85, N104, N148, and N209 each carry an N-linked (GlcNAc...) asparagine glycan. Intrachain disulfides connect C173–C220 and C276–C324. 2 N-linked (GlcNAc...) asparagine glycosylation sites follow: N339 and N388. C367 and C415 are oxidised to a cystine. Over residues 427–439 (GTLLQVNPKQIQS) the composition is skewed to polar residues. The interval 427–476 (GTLLQVNPKQIQSEPRETGSGGGFGSHRSMKPVNHGQKPTKMIPPSPPNV) is disordered. Fibronectin type-III domains are found at residues 470–578 (PPSP…LQPG) and 586–681 (VPEL…TQRP). An N-linked (GlcNAc...) asparagine glycan is attached at N475. Heparin contacts are provided by R506, K512, K514, and R552. N-linked (GlcNAc...) asparagine glycosylation is present at N568. The tract at residues 673–713 (LKQGRTQRPRASTTEEPTIQGIGDRDTTSHNQPSHNETVSM) is disordered. Composition is skewed to polar residues over residues 676 to 689 (GRTQ…TEEP) and 701 to 713 (SHNQ…TVSM). The helical transmembrane segment at 716–736 (MLTGTIGGGALLLILLVSAFL) threads the bilayer. Residues 737–906 (CMCRRRSPRG…SSGSLNSVGV (170 aa)) lie on the Cytoplasmic side of the membrane. Positions 789–906 (AQQQQQQLDE…SSGSLNSVGV (118 aa)) are disordered. Composition is skewed to low complexity over residues 854-866 (GNNN…SEAG) and 890-906 (SSRS…SVGV).

Belongs to the immunoglobulin superfamily. IHOG family. Homodimer. Heterotetramer; 2 iHog chains bind 2 hh chains when facilitated by heparin, heparin is required to promote high-affinity interactions between hh and iHog.

It is found in the membrane. In terms of biological role, mediates response to the active Hedgehog (Hh) protein signal in embryos, functioning upstream or at the level of patched (ptc). The protein is Interference hedgehog of Drosophila persimilis (Fruit fly).